A 161-amino-acid polypeptide reads, in one-letter code: Cyclic pyranopterin monophosphate synthase (161 aa).

Substrate contacts are provided by residues 76-78 (MCH) and 114-115 (ME). Residue D129 is part of the active site.

The protein belongs to the MoaC family. As to quaternary structure, homohexamer; trimer of dimers.

It carries out the reaction (8S)-3',8-cyclo-7,8-dihydroguanosine 5'-triphosphate = cyclic pyranopterin phosphate + diphosphate. The protein operates within cofactor biosynthesis; molybdopterin biosynthesis. Its function is as follows. Catalyzes the conversion of (8S)-3',8-cyclo-7,8-dihydroguanosine 5'-triphosphate to cyclic pyranopterin monophosphate (cPMP). The sequence is that of Cyclic pyranopterin monophosphate synthase from Clostridium acetobutylicum (strain ATCC 824 / DSM 792 / JCM 1419 / IAM 19013 / LMG 5710 / NBRC 13948 / NRRL B-527 / VKM B-1787 / 2291 / W).